Consider the following 191-residue polypeptide: UPF0302 protein USA300HOU_1400 (191 aa).

Belongs to the UPF0302 family.

The polypeptide is UPF0302 protein USA300HOU_1400 (Staphylococcus aureus (strain USA300 / TCH1516)).